The chain runs to 456 residues: Transcription factor tau subunit sfc1 (456 aa).

Disordered stretches follow at residues 394-416 and 437-456; these read DRYS…GLNT and HEGF…IFGD. Residues 407 to 416 show a composition bias toward polar residues; it reads LNDTVRGLNT. Residues 441–456 are compositionally biased toward acidic residues; it reads EDLEEIDDDYDDIFGD.

As to quaternary structure, component of the TFIIIC complex including sfc1, sfc3, sfc4, sfc6 and sfc7. The subunits are organized in two globular domains, tauA and tauB, connected by a proteolysis-sensitive and flexible linker. Interacts with sfc3, sfc4 and sfc6. In terms of processing, phosphorylated.

The protein resides in the nucleus. In terms of biological role, TFIIIC mediates tRNA and 5S RNA gene activation by binding to intragenic promoter elements. Upstream of the transcription start site, TFIIIC assembles the initiation complex TFIIIB-TFIIIC-tDNA, which is sufficient for RNA polymerase III recruitment and function. Part of the tauA domain of TFIIIC that binds boxA DNA promoter sites of tRNA and similar genes. Participates in the interconnection of tauA with tauB via its contacts with sfc3 and sfc6. Serves as a scaffold critical for tauA-DNA spatial configuration and tauB-DNA stability. Localizes to chromatin insulator sequence without recruiting RNA polymerase III and plays a role in nuclear organization. This Schizosaccharomyces pombe (strain 972 / ATCC 24843) (Fission yeast) protein is Transcription factor tau subunit sfc1 (sfc1).